Reading from the N-terminus, the 468-residue chain is Homocitrate synthase (468 aa).

Residues 11–266 (VGILDSTLRE…IEVVDLKKLS (256 aa)) form the Pyruvate carboxyltransferase domain. A 2-oxoglutarate-binding site is contributed by R19. Position 20 (E20) interacts with Mg(2+). 2-oxoglutarate contacts are provided by H83, R143, and T177. Positions 205 and 207 each coordinate Mg(2+). The active-site Proton acceptor is H299.

The protein belongs to the alpha-IPM synthase/homocitrate synthase family. Homocitrate synthase LYS20/LYS21 subfamily. Mg(2+) serves as cofactor. It depends on Mn(2+) as a cofactor.

The catalysed reaction is acetyl-CoA + 2-oxoglutarate + H2O = (2R)-homocitrate + CoA + H(+). It functions in the pathway amino-acid biosynthesis; L-lysine biosynthesis via AAA pathway; L-alpha-aminoadipate from 2-oxoglutarate: step 1/5. Its activity is regulated as follows. Inhibited by lysine. Functionally, catalyzes the aldol-type condensation of 2-oxoglutarate with acetyl-CoA to yield homocitrate. Carries out the first step of the alpha-aminoadipate (AAA) lysine biosynthesis pathway. Does not display 2-isopropylmalate synthase and citramalate synthase activities since it cannot use 2-oxoisovalerate or pyruvate as substrate. The protein is Homocitrate synthase of Sulfolobus acidocaldarius (strain ATCC 33909 / DSM 639 / JCM 8929 / NBRC 15157 / NCIMB 11770).